The sequence spans 501 residues: Lysine--tRNA ligase (501 aa).

Mg(2+) is bound by residues E412 and E419.

This sequence belongs to the class-II aminoacyl-tRNA synthetase family. Homodimer. The cofactor is Mg(2+).

The protein localises to the cytoplasm. It catalyses the reaction tRNA(Lys) + L-lysine + ATP = L-lysyl-tRNA(Lys) + AMP + diphosphate. This Dechloromonas aromatica (strain RCB) protein is Lysine--tRNA ligase.